Consider the following 471-residue polypeptide: Argininosuccinate lyase (471 aa).

Belongs to the lyase 1 family. Argininosuccinate lyase subfamily.

Its subcellular location is the cytoplasm. The enzyme catalyses 2-(N(omega)-L-arginino)succinate = fumarate + L-arginine. It participates in amino-acid biosynthesis; L-arginine biosynthesis; L-arginine from L-ornithine and carbamoyl phosphate: step 3/3. The chain is Argininosuccinate lyase from Acidiphilium cryptum (strain JF-5).